The primary structure comprises 397 residues: Tryptophan synthase beta chain (397 aa).

Position 87 is an N6-(pyridoxal phosphate)lysine (lysine 87).

Belongs to the TrpB family. As to quaternary structure, tetramer of two alpha and two beta chains. The cofactor is pyridoxal 5'-phosphate.

The catalysed reaction is (1S,2R)-1-C-(indol-3-yl)glycerol 3-phosphate + L-serine = D-glyceraldehyde 3-phosphate + L-tryptophan + H2O. It functions in the pathway amino-acid biosynthesis; L-tryptophan biosynthesis; L-tryptophan from chorismate: step 5/5. Functionally, the beta subunit is responsible for the synthesis of L-tryptophan from indole and L-serine. The protein is Tryptophan synthase beta chain of Escherichia coli O45:K1 (strain S88 / ExPEC).